We begin with the raw amino-acid sequence, 349 residues long: tRNA pseudouridine synthase D (349 aa).

Phenylalanine 27 is a binding site for substrate. The active-site Nucleophile is aspartate 80. Asparagine 129 is a binding site for substrate. The 149-residue stretch at 155–303 folds into the TRUD domain; that stretch reads GVPNYFGAQR…VEAARRAMLL (149 aa). Phenylalanine 329 contacts substrate.

This sequence belongs to the pseudouridine synthase TruD family.

The catalysed reaction is uridine(13) in tRNA = pseudouridine(13) in tRNA. Its function is as follows. Responsible for synthesis of pseudouridine from uracil-13 in transfer RNAs. This is tRNA pseudouridine synthase D from Escherichia coli (strain SMS-3-5 / SECEC).